The chain runs to 195 residues: Imidazoleglycerol-phosphate dehydratase (195 aa).

It belongs to the imidazoleglycerol-phosphate dehydratase family.

It localises to the cytoplasm. The catalysed reaction is D-erythro-1-(imidazol-4-yl)glycerol 3-phosphate = 3-(imidazol-4-yl)-2-oxopropyl phosphate + H2O. It participates in amino-acid biosynthesis; L-histidine biosynthesis; L-histidine from 5-phospho-alpha-D-ribose 1-diphosphate: step 6/9. In Citrifermentans bemidjiense (strain ATCC BAA-1014 / DSM 16622 / JCM 12645 / Bem) (Geobacter bemidjiensis), this protein is Imidazoleglycerol-phosphate dehydratase.